Consider the following 248-residue polypeptide: MKSVLKVSLAALTLAFAVSSHAADKKLVVATDTAFVPFEFKQGDKYVGFDVDLWAAIAKELKLDYELKPMDFSGIIPALQTKNVDLALAGITITDERKKAIDFSDGYYKSGLLVMVKANNNDVKSVKDLDGKVVAVKSGTGSVDYAKANIKTKDLRQFPNIDNAYMELGTNRADAVLHDTPNILYFIKTAGNGQFKAVGDSLEAQQYGIAFPKGSDELRDKVNGALKTLRENGTYNEIYKKWFGTEPK.

An N-terminal signal peptide occupies residues 1 to 22 (MKSVLKVSLAALTLAFAVSSHA).

This sequence belongs to the bacterial solute-binding protein 3 family.

The protein localises to the periplasm. Its function is as follows. Involved in a glutamine-transport system GlnHPQ. The polypeptide is Glutamine-binding periplasmic protein (glnH) (Escherichia coli O157:H7).